A 107-amino-acid polypeptide reads, in one-letter code: Thioredoxin (107 aa).

The Thioredoxin domain occupies 2-107; sequence SVSQVTDASF…LESTLNKYIS (106 aa). Residues cysteine 31 and cysteine 34 each act as nucleophile in the active site. Cysteine 31 and cysteine 34 form a disulfide bridge.

It belongs to the thioredoxin family.

The protein localises to the plastid. It localises to the chloroplast. In terms of biological role, participates in various redox reactions through the reversible oxidation of its active center dithiol to a disulfide and catalyzes dithiol-disulfide exchange reactions. The sequence is that of Thioredoxin (trxA) from Porphyra purpurea (Red seaweed).